The following is a 616-amino-acid chain: Pyrophosphate--fructose 6-phosphate 1-phosphotransferase subunit alpha (616 aa).

This sequence belongs to the phosphofructokinase type A (PFKA) family. PPi-dependent PFK group II subfamily. Clade 'Long' sub-subfamily. Tetramer of two alpha (regulatory) and two beta (catalytic) chains.

It localises to the cytoplasm. Its pathway is carbohydrate degradation; glycolysis; D-glyceraldehyde 3-phosphate and glycerone phosphate from D-glucose: step 3/4. With respect to regulation, allosterically activated by fructose 2,6-bisphosphate. Regulatory subunit of pyrophosphate--fructose 6-phosphate 1-phosphotransferase. This Solanum tuberosum (Potato) protein is Pyrophosphate--fructose 6-phosphate 1-phosphotransferase subunit alpha.